A 497-amino-acid chain; its full sequence is Serine hydroxymethyltransferase (497 aa).

(6S)-5,6,7,8-tetrahydrofolate contacts are provided by residues Leu176 and 180 to 182; that span reads GHL. An N6-(pyridoxal phosphate)lysine modification is found at Lys289.

This sequence belongs to the SHMT family. Homodimer. The cofactor is pyridoxal 5'-phosphate.

It is found in the cytoplasm. The enzyme catalyses (6R)-5,10-methylene-5,6,7,8-tetrahydrofolate + glycine + H2O = (6S)-5,6,7,8-tetrahydrofolate + L-serine. It functions in the pathway one-carbon metabolism; tetrahydrofolate interconversion. It participates in amino-acid biosynthesis; glycine biosynthesis; glycine from L-serine: step 1/1. Its function is as follows. Catalyzes the reversible interconversion of serine and glycine with tetrahydrofolate (THF) serving as the one-carbon carrier. This reaction serves as the major source of one-carbon groups required for the biosynthesis of purines, thymidylate, methionine, and other important biomolecules. Also exhibits THF-independent aldolase activity toward beta-hydroxyamino acids, producing glycine and aldehydes, via a retro-aldol mechanism. This chain is Serine hydroxymethyltransferase, found in Chlamydia trachomatis serovar L2b (strain UCH-1/proctitis).